We begin with the raw amino-acid sequence, 318 residues long: DNA polymerase IV (318 aa).

One can recognise a UmuC domain in the interval 6–186 (IIHIDMDAFY…LPLGKIPGVG (181 aa)). Mg(2+) contacts are provided by Asp-10 and Asp-104. Residue Glu-105 is part of the active site.

Belongs to the DNA polymerase type-Y family. Monomer. Requires Mg(2+) as cofactor.

The protein localises to the cytoplasm. The enzyme catalyses DNA(n) + a 2'-deoxyribonucleoside 5'-triphosphate = DNA(n+1) + diphosphate. In terms of biological role, poorly processive, error-prone DNA polymerase involved in untargeted mutagenesis. Copies undamaged DNA at stalled replication forks, which arise in vivo from mismatched or misaligned primer ends. These misaligned primers can be extended by PolIV. Exhibits no 3'-5' exonuclease (proofreading) activity. May be involved in translesional synthesis, in conjunction with the beta clamp from PolIII. The chain is DNA polymerase IV from Neisseria meningitidis serogroup B (strain ATCC BAA-335 / MC58).